The following is a 608-amino-acid chain: Albumin (608 aa).

Residues 1–18 (MKWVTFLLLLFVSDSAFS) form the signal peptide. A propeptide spanning residues 19–24 (RGLFRR) is cleaved from the precursor. Albumin domains follow at residues 19–211 (RGLF…ALKE), 212–403 (KALA…EFQP), and 404–601 (LVEE…KLVA). Histidine 27 serves as a coordination point for Cu cation. Serine 29 is modified (phosphoserine). Glutamate 30 and aspartate 37 together coordinate Ca(2+). Cysteine 77 and cysteine 86 are joined by a disulfide. Serine 82 and serine 89 each carry phosphoserine. Histidine 91 contributes to the Zn(2+) binding site. 6 cysteine pairs are disulfide-bonded: cysteine 99-cysteine 115, cysteine 114-cysteine 125, cysteine 148-cysteine 193, cysteine 192-cysteine 201, cysteine 224-cysteine 270, and cysteine 269-cysteine 277. Glutamate 268 lines the Ca(2+) pocket. Positions 271 and 273 each coordinate Zn(2+). Aspartate 273, glutamate 276, and aspartate 279 together coordinate Ca(2+). Cystine bridges form between cysteine 289/cysteine 303, cysteine 302/cysteine 313, cysteine 340/cysteine 385, cysteine 384/cysteine 393, cysteine 416/cysteine 462, cysteine 461/cysteine 472, cysteine 485/cysteine 501, and cysteine 500/cysteine 511. Position 297 is a phosphoserine (serine 297). At serine 443 the chain carries Phosphoserine. Phosphothreonine occurs at positions 444 and 446. N6-succinyllysine is present on lysine 460. Serine 513 carries the phosphoserine modification. 2 disulfide bridges follow: cysteine 538-cysteine 583 and cysteine 582-cysteine 591. Residue lysine 543 is modified to N6-succinyllysine. Lysine 558 is modified (N6-methyllysine). Position 570 is a phosphothreonine (threonine 570). Lysine 588 is subject to N6-succinyllysine.

The protein belongs to the ALB/AFP/VDB family. Interacts with FCGRT; this interaction regulates ALB homeostasis. Interacts with TASOR. In plasma, occurs in a covalently-linked complex with chromophore-bound alpha-1-microglobulin; this interaction does not prevent fatty acid binding to ALB. In terms of tissue distribution, plasma.

It localises to the secreted. Its function is as follows. Binds water, Ca(2+), Na(+), K(+), fatty acids, hormones, bilirubin and drugs. Its main function is the regulation of the colloidal osmotic pressure of blood. Major zinc transporter in plasma, typically binds about 80% of all plasma zinc. Major calcium and magnesium transporter in plasma, binds approximately 45% of circulating calcium and magnesium in plasma. Potentially has more than two calcium-binding sites and might additionally bind calcium in a non-specific manner. The shared binding site between zinc and calcium at residue Asp-273 suggests a crosstalk between zinc and calcium transport in the blood. The rank order of affinity is zinc &gt; calcium &gt; magnesium. Binds to the bacterial siderophore enterobactin and inhibits enterobactin-mediated iron uptake of E.coli from ferric transferrin, and may thereby limit the utilization of iron and growth of enteric bacteria such as E.coli. Does not prevent iron uptake by the bacterial siderophore aerobactin. The chain is Albumin from Mesocricetus auratus (Golden hamster).